The primary structure comprises 180 residues: Diphosphoinositol polyphosphate phosphohydrolase 2 (180 aa).

Met1 carries the post-translational modification N-acetylmethionine. Residues Arg10, 18-20 (KKR), and 39-41 (SSR) contribute to the substrate site. The Nudix hydrolase domain occupies 18–144 (KKRAACLCFR…VHAEYLEKLK (127 aa)). Gly50 and Glu66 together coordinate Mg(2+). Residues 51–72 (GGMEPEEEPGGAAVREVYEEAG) carry the Nudix box motif. Glu69 (proton acceptor) is an active-site residue. Glu70 lines the Mg(2+) pocket. Substrate-binding positions include 89–91 (RKH), Arg115, and Lys133.

This sequence belongs to the Nudix hydrolase family. DIPP subfamily. Mg(2+) is required as a cofactor. It depends on Mn(2+) as a cofactor. In terms of tissue distribution, expressed in heart and, at lower level in skeletal muscle, pancreas and kidney.

Its subcellular location is the cytoplasm. The enzyme catalyses diphospho-myo-inositol polyphosphate + H2O = myo-inositol polyphosphate + phosphate.. The catalysed reaction is 5-diphospho-1D-myo-inositol 1,2,3,4,6-pentakisphosphate + H2O = 1D-myo-inositol hexakisphosphate + phosphate + H(+). It catalyses the reaction 3,5-bis(diphospho)-1D-myo-inositol 1,2,4,6-tetrakisphosphate + H2O = 3-diphospho-1D-myo-inositol 1,2,4,5,6-pentakisphosphate + phosphate + 2 H(+). It carries out the reaction 5-diphospho-1D-myo-inositol 1,3,4,6-tetrakisphosphate + H2O = 1D-myo-inositol 1,3,4,5,6-pentakisphosphate + phosphate + H(+). The enzyme catalyses P(1),P(6)-bis(5'-adenosyl) hexaphosphate + H2O = 2 ATP + 2 H(+). The catalysed reaction is P(1),P(5)-bis(5'-adenosyl) pentaphosphate + H2O = ADP + ATP + 2 H(+). It catalyses the reaction 5-phospho-alpha-D-ribose 1-diphosphate + H2O = alpha-D-ribose 1,5-bisphosphate + phosphate + H(+). Its function is as follows. Cleaves the beta-phosphate from diphosphoinositol polyphosphates such as PP-InsP5 (diphosphoinositol pentakisphosphate), PP-InsP4 (diphosphoinositol tetrakisphosphate) and [PP]2-InsP4 (bisdiphosphoinositol tetrakisphosphate), suggesting that it may play a role in signal transduction. Diadenosine polyphosphates, particularly Ap6A (P(1),P(6)-bis(5a-adenosyl) hexaphosphate) and Ap5A (P(1),P(5)-bis(5'-adenosyl) pentaphosphate) are downstream effectors of a signaling cascade that regulates cardiac KATP channels, can also be substrates, although with lower preference than the diphosphoinositol polyphosphates. Can also catalyze the hydrolysis of 5-phosphoribose 1-diphosphate, generating the glycolytic activator ribose 1,5-bisphosphate. Does not play a role in U8 snoRNA decapping activity. Binds U8 snoRNA. In Homo sapiens (Human), this protein is Diphosphoinositol polyphosphate phosphohydrolase 2.